The sequence spans 554 residues: Glucose-binding protein GlcS (554 aa).

Topologically, residues 1-17 (MKRKYPYSLAKGLTSTQ) are cytoplasmic. The helical transmembrane segment at 18 to 38 (IAVIVAVIVIVIIIGVVAGFV) threads the bilayer. The Extracellular segment spans residues 39–525 (LTKGPSTTAV…YGLTNNTQKT (487 aa)). The helical transmembrane segment at 526–546 (SNSVMLFLLPFLALPLAIASI) threads the bilayer. The Cytoplasmic portion of the chain corresponds to 547 to 554 (DNKYYLLK).

The protein belongs to the bacterial solute-binding protein 1 family. The complex is composed of two ATP-binding proteins (GlcV), two transmembrane proteins (GlcT and GlcU) and a solute-binding protein (GlcS).

Its subcellular location is the cell membrane. Its activity is regulated as follows. Binding of glucose is strongly inhibited by galactose and mannose. In terms of biological role, part of the ABC transporter complex GlcSTUV involved in glucose uptake. Binds glucose. Can also bind galactose and mannose. In Saccharolobus solfataricus (strain ATCC 35092 / DSM 1617 / JCM 11322 / P2) (Sulfolobus solfataricus), this protein is Glucose-binding protein GlcS.